The following is a 70-amino-acid chain: Potassium channel toxin kappa-KTx 2.5 (70 aa).

Positions 1–26 (MESSRKSYVLMLFLAFVIMNVCSVSG) are cleaved as a signal peptide. A propeptide spanning residues 27-42 (EPKDGEIAGFEMEEAR) is cleaved from the precursor. Intrachain disulfides connect cysteine 46–cysteine 64 and cysteine 50–cysteine 60.

Belongs to the short scorpion toxin superfamily. Potassium channel inhibitor kappa-KTx family. Kappa-KTx 2 subfamily. In terms of tissue distribution, expressed by the venom gland.

The protein resides in the secreted. Functionally, voltage-independently blocks potassium currents on hKv1.1/KCNA1 (IC(50)=217 uM), and hKv1.4/KCNA4 (IC(50)=71 uM) (expressed in CHO cells). This Opisthacanthus cayaporum (South American scorpion) protein is Potassium channel toxin kappa-KTx 2.5.